The following is a 188-amino-acid chain: dITP/XTP pyrophosphatase (188 aa).

10–15 serves as a coordination point for substrate; the sequence is TSNPHK. Positions 39 and 69 each coordinate Mg(2+). Asp69 (proton acceptor) is an active-site residue. Residues Ser70, 145–148, Lys168, and 173–174 contribute to the substrate site; these read FGFD and HR.

It belongs to the HAM1 NTPase family. In terms of assembly, homodimer. Requires Mg(2+) as cofactor.

The catalysed reaction is XTP + H2O = XMP + diphosphate + H(+). It carries out the reaction dITP + H2O = dIMP + diphosphate + H(+). It catalyses the reaction ITP + H2O = IMP + diphosphate + H(+). In terms of biological role, pyrophosphatase that catalyzes the hydrolysis of nucleoside triphosphates to their monophosphate derivatives, with a high preference for the non-canonical purine nucleotides XTP (xanthosine triphosphate), dITP (deoxyinosine triphosphate) and ITP. Seems to function as a house-cleaning enzyme that removes non-canonical purine nucleotides from the nucleotide pool, thus preventing their incorporation into DNA/RNA and avoiding chromosomal lesions. This chain is dITP/XTP pyrophosphatase, found in Ignicoccus hospitalis (strain KIN4/I / DSM 18386 / JCM 14125).